The sequence spans 71 residues: MSRAALPSLENLEDDDEFEDFATENWPMKDTELDTGDDTLWENNWDDEDIGDDDFSVQLQAELKKKGVAAN.

A disordered region spans residues 1 to 38 (MSRAALPSLENLEDDDEFEDFATENWPMKDTELDTGDD). Positions 11 to 22 (NLEDDDEFEDFA) are enriched in acidic residues. Positions 16 to 25 (DEFEDFATEN) are UBS-II. Residues 38-49 (DTLWENNWDDED) are UBS-I.

The protein belongs to the DSS1/SEM1 family. In terms of assembly, interacts with mlo3, rae1, nup98/nup189 and nup146. Interacts with rad24. Interacts (via UBSs) with ubiquitin (ubi3/ubi5).

It is found in the cytoplasm. It localises to the nucleus. Versatile protein that might stabilize multiple protein complexes involved in diverse pathways. Subunit of the 26S proteasome which plays a role in ubiquitin-dependent proteolysis. Acts as a ubiquitin receptor of the 26S proteasome, by interacting with ubiquitin chains linked by 'Lys-63' and 'Lys-48'. Involved in nuclear export of specific sets of mRNAs. Links the mRNA adapter mlo3 to rae1 for targeting mRNA-protein complex to the proteins of the nucleoporin complex (NPC). Involved in recombinational repair of DNA. Plays a critical role in linking repair and checkpoint factors to damaged DNA sites by specifically recruiting rad24 and cdc25 to the DSBs. The chain is 26S proteasome complex subunit rpn15 (rpn15) from Schizosaccharomyces pombe (strain 972 / ATCC 24843) (Fission yeast).